An 871-amino-acid chain; its full sequence is MSKRPAGSHMEHNDLTDASIIRIPPHHYIHVLDQNTNIARVEVGPLTYIRQDNERVLFSPTRMTMVPPRHYCVILNPVARDDEGHVQFDTAGQAKLRHADLEIRLTQDPFPLYPGEEIQKEVTPLQIVYPDTALRLQALLDFEEESGEKRVAGDEWLFEGPGTYIPRKEVAVLEIIKATVIREHQAIRLRARKEGVDRSGTRRVTGEEWQVSKVGAYLPGAHEEVIDIVNAFILTDKRALHVRALRPFRDAGGRDRRTGEEWLVTVADREAHIPSVAEEVVGVVDVTTLNSREYCVILDPVGPDGKPQLGQKRVVKGERSFFLRPGEHLENGIQDVYVLSEEEGLVLRAVEAFNDTEAQEEDEEEEEEEEQAKKTSVQRRPGDRWMLRGPIEYVPPVTVEVMLRRQAIPLDENEGIYVRDIKTGKVRAVIGHTYMLTHDEELWEKELPPNVEKLLSTVRDPLADRSEHNQNAVAEPRDKTMVVSYRVPHNAAVQVYDYREKKARVVFGPDLVMLGPDEQFTVLSLSGEKPKRANVIKAICLLLGPDFCTDIITIETADHARLQLQLAYNWHFEVKNHSDPAQAAALFSVPDFVGDACKAIASRIRGAVASVQFDDFHKNSIRIICSAVFGFDEKLAVRSSLRFNQNGLVISSVDIQSVEPVDQRTRDALQKSVQLAIEITTNSQEATARHEAERLEQEARGKLERQKITDQAEAERARKELLELEALSAAVESTGAAKAEAQSRAEAARIQGEAAVQEAKLKVEALRIEAEAEMVRLAKAREQELLYKKELDHLEVEKQQKLVTIESQRFKQLVEAIGSETLTAMARAGPELQVKMLQALGLKSTLITDGSSPINLFTTANGLLGAMKAPE.

9 MVP repeats span residues 2 to 69, 70 to 124, 125 to 177, 178 to 230, 231 to 285, 286 to 336, 337 to 407, 408 to 482, and 483 to 545; these read SKRP…VPPR, HYCV…EVTP, LQIV…EIIK, ATVI…DIVN, AFIL…GVVD, VTTL…IQDV, YVLS…RRQA, IPLD…KTMV, and VSYR…LLGP. Residues 356 to 381 are disordered; the sequence is TEAQEEDEEEEEEEEQAKKTSVQRRP. The span at 357–370 shows a compositional bias: acidic residues; sequence EAQEEDEEEEEEEE. The interval 684–710 is disordered; sequence QEATARHEAERLEQEARGKLERQKITD. Positions 687 to 710 are enriched in basic and acidic residues; that stretch reads TARHEAERLEQEARGKLERQKITD. The region spanning 688-717 is the IQ domain; the sequence is ARHEAERLEQEARGKLERQKITDQAEAERA.

As to quaternary structure, the vault ribonucleoprotein particle is a huge (400 A x 670 A) cage structure of 12.9 MDa. It consists of a dimer of half-vaults, with each half-vault comprising 39 identical major vault protein (MVP) chains, PARP4 and one or more vault RNAs (vRNAs).

The protein resides in the cytoplasm. Its subcellular location is the nucleus. Its function is as follows. Required for normal vault structure. Vaults are multi-subunit structures that may act as scaffolds for proteins involved in signal transduction. Vaults may also play a role in nucleo-cytoplasmic transport. The protein is Major vault protein (mvp) of Ictalurus punctatus (Channel catfish).